A 485-amino-acid polypeptide reads, in one-letter code: Glutamyl-tRNA(Gln) amidotransferase subunit A (485 aa).

Residues K79 and S154 each act as charge relay system in the active site. S178 (acyl-ester intermediate) is an active-site residue.

This sequence belongs to the amidase family. GatA subfamily. As to quaternary structure, heterotrimer of A, B and C subunits.

The catalysed reaction is L-glutamyl-tRNA(Gln) + L-glutamine + ATP + H2O = L-glutaminyl-tRNA(Gln) + L-glutamate + ADP + phosphate + H(+). Allows the formation of correctly charged Gln-tRNA(Gln) through the transamidation of misacylated Glu-tRNA(Gln) in organisms which lack glutaminyl-tRNA synthetase. The reaction takes place in the presence of glutamine and ATP through an activated gamma-phospho-Glu-tRNA(Gln). This Staphylococcus haemolyticus (strain JCSC1435) protein is Glutamyl-tRNA(Gln) amidotransferase subunit A.